A 484-amino-acid chain; its full sequence is Chromosomal replication initiator protein DnaA (484 aa).

Residues 1-73 (MQEGKNIWSL…EILTEKGHNT (73 aa)) form a domain I, interacts with DnaA modulators region. The segment at 73 to 140 (TINVEFINPP…EDIHTKYRNP (68 aa)) is domain II. Positions 141–357 (FLKKKYTFEN…AAVTKLKAHI (217 aa)) are domain III, AAA+ region. Residues glycine 185, glycine 187, lysine 188, and threonine 189 each coordinate ATP. A domain IV, binds dsDNA region spans residues 358 to 484 (DLEDIEIDTS…IELMNKINKN (127 aa)).

This sequence belongs to the DnaA family. In terms of assembly, oligomerizes as a right-handed, spiral filament on DNA at oriC.

Its subcellular location is the cytoplasm. Its function is as follows. Plays an essential role in the initiation and regulation of chromosomal replication. ATP-DnaA binds to the origin of replication (oriC) to initiate formation of the DNA replication initiation complex once per cell cycle. Binds the DnaA box (a 9 base pair repeat at the origin) and separates the double-stranded (ds)DNA. Forms a right-handed helical filament on oriC DNA; dsDNA binds to the exterior of the filament while single-stranded (ss)DNA is stabiized in the filament's interior. The ATP-DnaA-oriC complex binds and stabilizes one strand of the AT-rich DNA unwinding element (DUE), permitting loading of DNA polymerase. After initiation quickly degrades to an ADP-DnaA complex that is not apt for DNA replication. Binds acidic phospholipids. This Borrelia turicatae (strain 91E135) protein is Chromosomal replication initiator protein DnaA.